A 345-amino-acid polypeptide reads, in one-letter code: MPKAYENAGVSVEAGYEVVKRIKSHVARTNRPGVVGGIGGFGGLFDLASLGYKEPVLISGTDGVGTKLMVAKLANKHNTIGIDCVAMCVNDIAAQGAEPLFFLDYIACGKNDPALLEQVVAGVADGCVQAGSALVGGETAEMPGMYDEDEYDLAGFSIGVAEKSAIVDGSTIVEGDVLIGLPSTGVHSNGFSLVRKALFEQAGYTVDTKLDELGGEKLGDVLLTPTKIYVKALSPLFKAGVVKGVAHITGGGFIENIPRMIPDGLAAEIELGTWPVLPIFDVLEKAGNIDHKEMYNIFNMGIGMVLAIDPARKDEALKLLADNNEPAYVLGQITADTTGTQIVLK.

It belongs to the AIR synthase family.

The protein localises to the cytoplasm. It carries out the reaction 2-formamido-N(1)-(5-O-phospho-beta-D-ribosyl)acetamidine + ATP = 5-amino-1-(5-phospho-beta-D-ribosyl)imidazole + ADP + phosphate + H(+). Its pathway is purine metabolism; IMP biosynthesis via de novo pathway; 5-amino-1-(5-phospho-D-ribosyl)imidazole from N(2)-formyl-N(1)-(5-phospho-D-ribosyl)glycinamide: step 2/2. The polypeptide is Phosphoribosylformylglycinamidine cyclo-ligase (Bifidobacterium longum subsp. infantis (strain ATCC 15697 / DSM 20088 / JCM 1222 / NCTC 11817 / S12)).